Consider the following 248-residue polypeptide: NLP effector protein Pc121494 (248 aa).

Positions 1-19 (MKFIAVLIAAIASLSAVQA) are cleaved as a signal peptide. Positions 124 to 130 (GHRNGWE) match the Hepta-peptide GHRHDWE motif motif. An N-linked (GlcNAc...) asparagine glycan is attached at N143.

This sequence belongs to the Necrosis inducing protein (NPP1) family.

The protein resides in the secreted. In terms of biological role, secreted effector that contributes strongly to virulence during infection by P.capsici. This chain is NLP effector protein Pc121494, found in Phytophthora capsici.